A 157-amino-acid chain; its full sequence is Transcription elongation factor GreA (157 aa).

It belongs to the GreA/GreB family.

Necessary for efficient RNA polymerase transcription elongation past template-encoded arresting sites. The arresting sites in DNA have the property of trapping a certain fraction of elongating RNA polymerases that pass through, resulting in locked ternary complexes. Cleavage of the nascent transcript by cleavage factors such as GreA or GreB allows the resumption of elongation from the new 3'terminus. GreA releases sequences of 2 to 3 nucleotides. The chain is Transcription elongation factor GreA from Caulobacter vibrioides (strain ATCC 19089 / CIP 103742 / CB 15) (Caulobacter crescentus).